The chain runs to 469 residues: Ribulose bisphosphate carboxylase large chain (469 aa).

A propeptide spanning residues 1–2 is cleaved from the precursor; it reads MS. At P3 the chain carries N-acetylproline. An N6,N6,N6-trimethyllysine modification is found at K14. N123 and T173 together coordinate substrate. K175 functions as the Proton acceptor in the catalytic mechanism. K177 provides a ligand contact to substrate. The Mg(2+) site is built by K201, D203, and E204. K201 carries the N6-carboxylysine modification. H294 serves as the catalytic Proton acceptor. Substrate-binding residues include R295, H327, and S379.

This sequence belongs to the RuBisCO large chain family. Type I subfamily. As to quaternary structure, heterohexadecamer of 8 large chains and 8 small chains; disulfide-linked. The disulfide link is formed within the large subunit homodimers. Mg(2+) is required as a cofactor. In terms of processing, the disulfide bond which can form in the large chain dimeric partners within the hexadecamer appears to be associated with oxidative stress and protein turnover.

Its subcellular location is the plastid. The protein resides in the chloroplast. The catalysed reaction is 2 (2R)-3-phosphoglycerate + 2 H(+) = D-ribulose 1,5-bisphosphate + CO2 + H2O. It carries out the reaction D-ribulose 1,5-bisphosphate + O2 = 2-phosphoglycolate + (2R)-3-phosphoglycerate + 2 H(+). In terms of biological role, ruBisCO catalyzes two reactions: the carboxylation of D-ribulose 1,5-bisphosphate, the primary event in carbon dioxide fixation, as well as the oxidative fragmentation of the pentose substrate in the photorespiration process. Both reactions occur simultaneously and in competition at the same active site. The sequence is that of Ribulose bisphosphate carboxylase large chain from Dianthus caryophyllus (Carnation).